The chain runs to 537 residues: CWF19-like protein 1 (537 aa).

Positions 297–323 (KQGRKRPSTGRDTRPPHAKQPRKPPQP) are disordered.

Belongs to the CWF19 family.

The chain is CWF19-like protein 1 (Cwf19l1) from Mus musculus (Mouse).